The following is a 514-amino-acid chain: Exoglucanase 1 (514 aa).

The first 17 residues, 1 to 17 (MYRKLAVISAFLATARA), serve as a signal peptide directing secretion. Glutamine 18 bears the Pyrrolidone carboxylic acid mark. Residues 18 to 453 (QSACTLQSET…GSTGNPSGGN (436 aa)) are catalytic. 10 cysteine pairs are disulfide-bonded: cysteine 21/cysteine 89, cysteine 36/cysteine 42, cysteine 67/cysteine 88, cysteine 78/cysteine 84, cysteine 155/cysteine 414, cysteine 189/cysteine 227, cysteine 193/cysteine 226, cysteine 247/cysteine 273, cysteine 255/cysteine 260, and cysteine 278/cysteine 348. Asparagine 62 carries N-linked (GlcNAc) asparagine glycosylation. Catalysis depends on glutamate 229, which acts as the Nucleophile. Catalysis depends on glutamate 234, which acts as the Proton donor/acceptor. The N-linked (GlcNAc...) (high mannose) asparagine glycan is linked to asparagine 287. N-linked (GlcNAc) asparagine glycosylation occurs at asparagine 401. Residues 401–437 (NETSSTPGAVRGSCSTSSGVPAQVESQSPNAKVTFSN) are compositionally biased toward polar residues. The segment at 401-481 (NETSSTPGAV…TGSSPGPTQS (81 aa)) is disordered. The linker stretch occupies residues 454-478 (PPGGNPPGTTTTRRPATTTGSSPGP). Low complexity predominate over residues 460 to 479 (PGTTTTRRPATTTGSSPGPT). Threonine 462 carries an O-linked (Man) threonine glycan. O-linked (Man...) threonine glycans are attached at residues threonine 463, threonine 464, and threonine 465. The O-linked (Man) threonine glycan is linked to threonine 470. Threonine 471 and threonine 472 each carry an O-linked (Man...) threonine glycan. O-linked (Man) serine glycans are attached at residues serine 474 and serine 475. One can recognise a CBM1 domain in the interval 478-514 (PTQSHYGQCGGIGYSGPTVCASGTTCQVLNPYYSQCL). Threonine 479 carries O-linked (Man) threonine glycosylation. 2 O-linked (Man) serine glycosylation sites follow: serine 481 and serine 492. Cystine bridges form between cysteine 486/cysteine 503 and cysteine 497/cysteine 513.

It belongs to the glycosyl hydrolase 7 (cellulase C) family. Post-translationally, N-glycosylated. A high mannose glycan is attached to Asn-287 (predominantly Man(8)GlcNAc(2)) and single GlcNAc occupancy is observed at Asn-62 and Asn-401 with some site heterogeneity depending on strains and fermentation conditions. In terms of processing, O-glycosylated. Within the linker domain, all 8 threonines are variably glycosylated with between at least one, and up to three, mannose residues per site. All serines in this domain are at least partially glycosylated with a single mannose residue. O-glycosylation of the cellulase linker provides protection from proteolysis. Linker glycans also contribute to binding affinity of cellobiohydrolases to cellulose.

It is found in the secreted. The enzyme catalyses Hydrolysis of (1-&gt;4)-beta-D-glucosidic linkages in cellulose and cellotetraose, releasing cellobiose from the non-reducing ends of the chains.. Its function is as follows. Exocellobiohydrolases (CBH) that catalyzes the hydrolysis of 1,4-beta-D-glucosidic bonds in cellulose to release the disaccharide cellobiose. The degradation of cellulose involves an interplay between different cellulolytic enzymes. Hydrolysis starts with endoglucanases (EGs), which cut internal beta-1,4-glucosidic bonds in cellulose to reduce the polymerization degree of the substrate and create new chain ends for exocellobiohydrolases (CBHs). The CBHs release the disaccharide cellobiose from the non-reducing end of the cellulose polymer chain. Finally, beta-1,4-glucosidases hydrolyze the cellobiose and other short cello-oligosaccharides into glucose units. This Hypocrea jecorina (strain ATCC 56765 / BCRC 32924 / NRRL 11460 / Rut C-30) (Trichoderma reesei) protein is Exoglucanase 1 (cbh1).